A 314-amino-acid chain; its full sequence is Ecto-ADP-ribosyltransferase 4 (314 aa).

Positions 1–46 (MGPLINRCKKILLPTTVPPATMRIWLLGGLLPFLLLLSGLQRPTEG) are cleaved as a signal peptide. 2 disulfide bridges follow: Cys-69-Cys-280 and Cys-182-Cys-231. In terms of domain architecture, TR mART core spans 91 to 276 (KNYFRMWQKA…LQLRSTGNLS (186 aa)). The N-linked (GlcNAc...) asparagine glycan is linked to Asn-114. Residue Tyr-126 participates in NAD(+) binding. Asn-178 carries N-linked (GlcNAc...) asparagine glycosylation. Residue Gln-206 coordinates NAD(+). The N-linked (GlcNAc...) asparagine glycan is linked to Asn-222. An NAD(+)-binding site is contributed by Ser-240. N-linked (GlcNAc...) asparagine glycans are attached at residues Asn-257 and Asn-274. Ala-285 carries GPI-anchor amidated alanine lipidation. The propeptide at 286–314 (SSKKCIPDPIAIASLSFLTSVIIFSKSRV) is removed in mature form.

It belongs to the Arg-specific ADP-ribosyltransferase family. As to expression, expressed in spleen and T-cells.

It localises to the cell membrane. It carries out the reaction L-arginyl-[protein] + NAD(+) = N(omega)-(ADP-D-ribosyl)-L-arginyl-[protein] + nicotinamide + H(+). The polypeptide is Ecto-ADP-ribosyltransferase 4 (ART4) (Homo sapiens (Human)).